The chain runs to 264 residues: Thymidylate synthase (264 aa).

Arginine 21 lines the dUMP pocket. A (6R)-5,10-methylene-5,6,7,8-tetrahydrofolate-binding site is contributed by histidine 51. 126-127 (RR) is a dUMP binding site. Cysteine 146 functions as the Nucleophile in the catalytic mechanism. Residues 166–169 (RSCD), asparagine 177, and 207–209 (HLY) contribute to the dUMP site. Aspartate 169 lines the (6R)-5,10-methylene-5,6,7,8-tetrahydrofolate pocket. Residue alanine 263 coordinates (6R)-5,10-methylene-5,6,7,8-tetrahydrofolate.

Belongs to the thymidylate synthase family. Bacterial-type ThyA subfamily. As to quaternary structure, homodimer.

It localises to the cytoplasm. The enzyme catalyses dUMP + (6R)-5,10-methylene-5,6,7,8-tetrahydrofolate = 7,8-dihydrofolate + dTMP. Its pathway is pyrimidine metabolism; dTTP biosynthesis. In terms of biological role, catalyzes the reductive methylation of 2'-deoxyuridine-5'-monophosphate (dUMP) to 2'-deoxythymidine-5'-monophosphate (dTMP) while utilizing 5,10-methylenetetrahydrofolate (mTHF) as the methyl donor and reductant in the reaction, yielding dihydrofolate (DHF) as a by-product. This enzymatic reaction provides an intracellular de novo source of dTMP, an essential precursor for DNA biosynthesis. This Hamiltonella defensa subsp. Acyrthosiphon pisum (strain 5AT) protein is Thymidylate synthase.